The sequence spans 327 residues: Ornithine carbamoyltransferase (327 aa).

Residues 56–59 (STRT), Gln-83, Arg-107, and 134–137 (HPTQ) contribute to the carbamoyl phosphate site. L-ornithine is bound by residues Asn-166, Asp-230, and 234–235 (SM). Carbamoyl phosphate-binding positions include 269–270 (CL) and Arg-314.

Belongs to the aspartate/ornithine carbamoyltransferase superfamily. OTCase family.

It localises to the cytoplasm. The enzyme catalyses carbamoyl phosphate + L-ornithine = L-citrulline + phosphate + H(+). It functions in the pathway amino-acid degradation; L-arginine degradation via ADI pathway; carbamoyl phosphate from L-arginine: step 2/2. In terms of biological role, reversibly catalyzes the transfer of the carbamoyl group from carbamoyl phosphate (CP) to the N(epsilon) atom of ornithine (ORN) to produce L-citrulline. This Borreliella burgdorferi (strain ZS7) (Borrelia burgdorferi) protein is Ornithine carbamoyltransferase.